Reading from the N-terminus, the 101-residue chain is Small ribosomal subunit protein bS16 (101 aa).

This sequence belongs to the bacterial ribosomal protein bS16 family.

This is Small ribosomal subunit protein bS16 from Ureaplasma parvum serovar 3 (strain ATCC 700970).